The chain runs to 493 residues: Transmembrane and coiled-coil domain-containing protein 6 (493 aa).

Positions 15 to 84 (GVEELRRRRR…QRGTEEKERE (70 aa)) form a coiled coil. 2 helical membrane-spanning segments follow: residues 338–358 (VVAA…SLLP) and 386–406 (PLLQ…TVLC).

The protein resides in the membrane. The protein is Transmembrane and coiled-coil domain-containing protein 6 (TMCO6) of Homo sapiens (Human).